The chain runs to 213 residues: StAR-related lipid transfer protein 5 (213 aa).

The 213-residue stretch at 1–213 folds into the START domain; the sequence is MDPSWATQES…LQKAVRKFHH (213 aa).

As to expression, expressed in most tissues, with highest levels in liver and in kidney.

May be involved in the intracellular transport of sterols or other lipids. May bind cholesterol or other sterols. This chain is StAR-related lipid transfer protein 5 (Stard5), found in Mus musculus (Mouse).